A 339-amino-acid chain; its full sequence is Homeobox protein Hox-D13 (339 aa).

The tract at residues methionine 1–proline 33 is disordered. Residues glycine 20 to proline 33 are compositionally biased toward low complexity. Residues glycine 272–valine 331 constitute a DNA-binding region (homeobox).

It belongs to the Abd-B homeobox family.

The protein resides in the nucleus. Functionally, sequence-specific transcription factor that binds gene promoters and activates their transcription. Part of a developmental regulatory system that provides cells with specific positional identities on the anterior-posterior axis. This is Homeobox protein Hox-D13 (Hoxd13) from Mus musculus (Mouse).